We begin with the raw amino-acid sequence, 279 residues long: Osmoprotective compounds uptake permease protein GgtC (279 aa).

The next 7 helical transmembrane spans lie at 7–27 (LLFL…LSFF), 58–78 (LWLV…AVLV), 90–110 (IIFL…KFVY), 120–140 (IGLL…WLVE), 146–166 (FALI…ILSA), 202–222 (LLVV…IVFV), and 247–267 (FGRG…VMIT). Residues 53-270 (FRNNLLWLVL…IVPVMITNIR (218 aa)) enclose the ABC transmembrane type-1 domain.

This sequence belongs to the binding-protein-dependent transport system permease family. In terms of assembly, the complex is composed of two ATP-binding proteins (GgtA), two transmembrane proteins (GgtC and GgtD) and a solute-binding protein (GgtB).

It localises to the cell membrane. In terms of biological role, part of the ABC transporter complex GgtABCD involved in the uptake of the osmoprotective compounds glucosylglycerol (GG), sucrose and trehalose. Responsible for the translocation of the substrate across the membrane. This Synechocystis sp. (strain ATCC 27184 / PCC 6803 / Kazusa) protein is Osmoprotective compounds uptake permease protein GgtC.